The following is a 203-amino-acid chain: NADH-quinone oxidoreductase subunit C (203 aa).

It belongs to the complex I 30 kDa subunit family. As to quaternary structure, NDH-1 is composed of 14 different subunits. Subunits NuoB, C, D, E, F, and G constitute the peripheral sector of the complex.

It localises to the cell inner membrane. The enzyme catalyses a quinone + NADH + 5 H(+)(in) = a quinol + NAD(+) + 4 H(+)(out). Its function is as follows. NDH-1 shuttles electrons from NADH, via FMN and iron-sulfur (Fe-S) centers, to quinones in the respiratory chain. The immediate electron acceptor for the enzyme in this species is believed to be ubiquinone. Couples the redox reaction to proton translocation (for every two electrons transferred, four hydrogen ions are translocated across the cytoplasmic membrane), and thus conserves the redox energy in a proton gradient. This chain is NADH-quinone oxidoreductase subunit C, found in Delftia acidovorans (strain DSM 14801 / SPH-1).